We begin with the raw amino-acid sequence, 665 residues long: MKSLSVIFKPKSSPAKIYFPADRQASPDESHFISLIHACKDTASLRHVHAQILRRGVLSSRVAAQLVSCSSLLKSPDYSLSIFRNSEERNPFVLNALIRGLTENARFESSVRHFILMLRLGVKPDRLTFPFVLKSNSKLGFRWLGRALHAATLKNFVDCDSFVRLSLVDMYAKTGQLKHAFQVFEESPDRIKKESILIWNVLINGYCRAKDMHMATTLFRSMPERNSGSWSTLIKGYVDSGELNRAKQLFELMPEKNVVSWTTLINGFSQTGDYETAISTYFEMLEKGLKPNEYTIAAVLSACSKSGALGSGIRIHGYILDNGIKLDRAIGTALVDMYAKCGELDCAATVFSNMNHKDILSWTAMIQGWAVHGRFHQAIQCFRQMMYSGEKPDEVVFLAVLTACLNSSEVDLGLNFFDSMRLDYAIEPTLKHYVLVVDLLGRAGKLNEAHELVENMPINPDLTTWAALYRACKAHKGYRRAESVSQNLLELDPELCGSYIFLDKTHASKGNIQDVEKRRLSLQKRIKERSLGWSYIELDGQLNKFSAGDYSHKLTQEIGLKLDEIISLAIQKGYNPGADWSIHDIEEEEKENVTGIHSEKLALTLGFLRTAPGTTIRIIKNLRICGDCHSLMKYVSKISQRDILLRDARQFHHFKDGRCSCGDYW.

PPR repeat units lie at residues 90–124, 125–155, 160–190, 195–229, 230–256, 257–291, 292–326, 327–357, 358–392, 393–423, and 429–459; these read NPFV…GVKP, DRLT…TLKN, DSFV…SPDR, SILI…NSGS, WSTL…MPEK, NVVS…GLKP, NEYT…GIKL, DRAI…MNHK, DILS…GEKP, DEVV…MRLD, and TLKH…MPIN. Residues 464-539 are type E motif; that stretch reads TWAALYRACK…SLGWSYIELD (76 aa). The tract at residues 540 to 570 is type E(+) motif; sequence GQLNKFSAGDYSHKLTQEIGLKLDEIISLAI. The tract at residues 571–665 is type DYW motif; that stretch reads QKGYNPGADW…DGRCSCGDYW (95 aa).

This sequence belongs to the PPR family. PCMP-H subfamily.

The protein is Pentatricopeptide repeat-containing protein At1g04840 (PCMP-H64) of Arabidopsis thaliana (Mouse-ear cress).